The sequence spans 473 residues: Cytochrome c-552 (473 aa).

A signal peptide spans 1 to 33 (MQHGDEMMKKMTGKSFALSALVAASFMAAGAMA). His-93 lines the heme c pocket. 3 residues coordinate heme: Cys-121, Cys-124, and Lys-125. Positions 159, 162, 163, 201, 204, and 205 each coordinate heme c. The Ca(2+) site is built by Glu-207, Tyr-208, Lys-256, and Gln-258. Position 208 (Tyr-208) interacts with substrate. Residue His-259 coordinates substrate. Residues His-270, Cys-277, Cys-280, His-281, His-296, Cys-309, Cys-312, His-313, and His-388 each coordinate heme c.

The protein belongs to the cytochrome c-552 family. It depends on Ca(2+) as a cofactor. Heme c is required as a cofactor.

The protein resides in the periplasm. The catalysed reaction is 6 Fe(III)-[cytochrome c] + NH4(+) + 2 H2O = 6 Fe(II)-[cytochrome c] + nitrite + 8 H(+). The protein operates within nitrogen metabolism; nitrate reduction (assimilation). In terms of biological role, catalyzes the reduction of nitrite to ammonia, consuming six electrons in the process. In Shewanella sp. (strain ANA-3), this protein is Cytochrome c-552.